Here is a 295-residue protein sequence, read N- to C-terminus: MSSENKSPLLERARNLVPHLETERHKGQAGRIGIVGGSLEYTGAPYFAAISALKVGADLVHVFCPQAAAQVIKGYSPELIVHPLLDSNNAIIQIEPWLERLHVLVIGPGLGRDRLILQTVAELIRICRQLQKPLIIDADGLFLITQDIGLVKDYYGVILTPNAIEFCRLFGKDRDQTMASLGRLGAGVTVIEKGLNDRIYDSLTSEKYECPQGGSGRRCGGQGDLLAGALATFYYWALESKQEISPAMVACFAASTLTKTCNKYAFKAKGRSMTCSDMIDQIHQVFDDLFEHKKD.

One can recognise a YjeF C-terminal domain in the interval 9–289 (LLERARNLVP…DQIHQVFDDL (281 aa)). Residues glycine 109 and 162–168 (NAIEFCR) contribute to the (6S)-NADPHX site. ATP contacts are provided by residues 193 to 197 (KGLND) and 214 to 223 (GSGRRCGGQG). Aspartate 224 provides a ligand contact to (6S)-NADPHX.

It belongs to the NnrD/CARKD family. The cofactor is Mg(2+).

The catalysed reaction is (6S)-NADHX + ATP = ADP + phosphate + NADH + H(+). It catalyses the reaction (6S)-NADPHX + ATP = ADP + phosphate + NADPH + H(+). Its function is as follows. Catalyzes the dehydration of the S-form of NAD(P)HX at the expense of ATP, which is converted to ADP. Together with NAD(P)HX epimerase, which catalyzes the epimerization of the S- and R-forms, the enzyme allows the repair of both epimers of NAD(P)HX, a damaged form of NAD(P)H that is a result of enzymatic or heat-dependent hydration. The polypeptide is ATP-dependent (S)-NAD(P)H-hydrate dehydratase (Anopheles darlingi (Mosquito)).